A 204-amino-acid chain; its full sequence is N-(5'-phosphoribosyl)anthranilate isomerase (204 aa).

It belongs to the TrpF family.

The catalysed reaction is N-(5-phospho-beta-D-ribosyl)anthranilate = 1-(2-carboxyphenylamino)-1-deoxy-D-ribulose 5-phosphate. The protein operates within amino-acid biosynthesis; L-tryptophan biosynthesis; L-tryptophan from chorismate: step 3/5. The chain is N-(5'-phosphoribosyl)anthranilate isomerase from Bacillus cereus (strain G9842).